The primary structure comprises 260 residues: Transcription factor MYB4 (260 aa).

HTH myb-type domains lie at 12 to 64 and 65 to 119; these read AVEV…LNYL and RPGI…SKRS. 2 consecutive DNA-binding regions (H-T-H motif) follow at residues 40–64 and 92–115; these read WRMLPAKAGLKRCGKSCRLRWLNYL and WSIIAGRIPGRTDNEIKNHWNTHL.

The protein localises to the nucleus. In terms of biological role, transcription activator involved in the spatiotemporal regulation of flavonoid biosynthesis specifically in the corms of Montbretia. Activates the promoters of enzymes involved in the biosynthesis of the flavonol myricetin and the flavonol-glycoside montbretin A (MbA). MbA is a potent inhibitor of human pancreatic alpha-amylase and is being developed as drug candidate to treat type-2 diabetes. In Crocosmia x crocosmiiflora (Montbretia), this protein is Transcription factor MYB4.